The sequence spans 229 residues: Type III pantothenate kinase (229 aa).

Residue 6–13 participates in ATP binding; that stretch reads NIGNSRQH. Residues Tyr77 and 81–84 each bind substrate; that span reads GIDR. Residue Asp83 is the Proton acceptor of the active site. Asp103 contacts K(+). Thr106 contributes to the ATP binding site. Thr159 serves as a coordination point for substrate.

The protein belongs to the type III pantothenate kinase family. In terms of assembly, homodimer. NH4(+) serves as cofactor. The cofactor is K(+).

It localises to the cytoplasm. The catalysed reaction is (R)-pantothenate + ATP = (R)-4'-phosphopantothenate + ADP + H(+). The protein operates within cofactor biosynthesis; coenzyme A biosynthesis; CoA from (R)-pantothenate: step 1/5. Catalyzes the phosphorylation of pantothenate (Pan), the first step in CoA biosynthesis. In Gloeobacter violaceus (strain ATCC 29082 / PCC 7421), this protein is Type III pantothenate kinase.